We begin with the raw amino-acid sequence, 133 residues long: Ribosome-binding factor A (133 aa).

Belongs to the RbfA family. In terms of assembly, monomer. Binds 30S ribosomal subunits, but not 50S ribosomal subunits or 70S ribosomes.

The protein resides in the cytoplasm. Functionally, one of several proteins that assist in the late maturation steps of the functional core of the 30S ribosomal subunit. Associates with free 30S ribosomal subunits (but not with 30S subunits that are part of 70S ribosomes or polysomes). Required for efficient processing of 16S rRNA. May interact with the 5'-terminal helix region of 16S rRNA. This chain is Ribosome-binding factor A, found in Pseudomonas fluorescens (strain Pf0-1).